A 135-amino-acid chain; its full sequence is Large ribosomal subunit protein uL22c (135 aa).

The protein belongs to the universal ribosomal protein uL22 family. Part of the 50S ribosomal subunit.

It is found in the plastid. Its function is as follows. This protein binds specifically to 23S rRNA. In terms of biological role, the globular domain of the protein is located near the polypeptide exit tunnel on the outside of the subunit, while an extended beta-hairpin is found that lines the wall of the exit tunnel in the center of the 70S ribosome. This chain is Large ribosomal subunit protein uL22c (rpl22), found in Cuscuta exaltata (Tall dodder).